A 230-amino-acid chain; its full sequence is Large ribosomal subunit protein uL1 (230 aa).

It belongs to the universal ribosomal protein uL1 family. In terms of assembly, part of the 50S ribosomal subunit.

Functionally, binds directly to 23S rRNA. The L1 stalk is quite mobile in the ribosome, and is involved in E site tRNA release. Protein L1 is also a translational repressor protein, it controls the translation of the L11 operon by binding to its mRNA. The polypeptide is Large ribosomal subunit protein uL1 (Leptospira interrogans serogroup Icterohaemorrhagiae serovar copenhageni (strain Fiocruz L1-130)).